The sequence spans 137 residues: Seminal plasma sperm motility inhibitor (137 aa).

Positions 1–21 are cleaved as a signal peptide; it reads MKLGSAIPWALLLSTXTLVST. Cys-30 and Cys-51 form a disulfide bridge. In terms of domain architecture, CUB spans 30–131; the sequence is CGGFLKNYSG…SSFNVYFYGI (102 aa). A glycan (N-linked (GlcNAc...) asparagine) is linked at Asn-36.

The protein belongs to the spermadhesin family. Seminal plasma or sperm.

The protein localises to the secreted. In terms of biological role, inhibitor of sperm motility. This chain is Seminal plasma sperm motility inhibitor (SPMI), found in Sus scrofa (Pig).